A 486-amino-acid polypeptide reads, in one-letter code: MSNNFKDDFEKNRQSIDTNSHQDHTEDVEKDQSELEHQDTIENTEQQFPPRNAQRRKRRRDLATNHNKQVHNESQTSEDNVQNEAGTIDDRQVESSHSTESQEPSHQDSTPQHEEGYYNKNAFAMDKSHPEPIEDNDKHETIKEAENNTEHSTVSDKSEAEQSQQPKPYFATGANQANTSKDKHDDVTVKQDKDESKDHHSGKKGAAIGAGTAGVAGAAGAMGVSKAKKHSNDAQNKSNSGKVNNSTEDKASEDKSKEHHNGKKGAAIGAGTAGLAGGAASNSASAASKPHASNNASQNNDEHDHHDRDKERKKGGMAKVLLPLIAAVLIIGALAIFGGMALNNHNNGTKENKIANTNKNNADESKDKDTSKDASKDKSKSTDSDKSKDDQDKATKDESDNDQNNANQANNQAQNNQNQQQANQNQQQQQQRQGGGQRHTVNGQENLYRIAIQYYGSGSPENVEKIRRANGLSGNNIRNGQQIVIP.

Over residues 1–40 (MSNNFKDDFEKNRQSIDTNSHQDHTEDVEKDQSELEHQDT) the composition is skewed to basic and acidic residues. A disordered region spans residues 1 to 314 (MSNNFKDDFE…HHDRDKERKK (314 aa)). Over 2–204 (SNNFKDDFEK…ESKDHHSGKK (203 aa)) the chain is Extracellular. Residues 14–34 (QSIDTNSHQDHTEDVEKDQSE) are elastin-binding. Residues 64–85 (TNHNKQVHNESQTSEDNVQNEA) show a composition bias toward polar residues. 3 stretches are compositionally biased toward basic and acidic residues: residues 103–117 (EPSH…EEGY), 126–160 (DKSH…KSEA), and 180–199 (SKDK…SKDH). Low complexity predominate over residues 204 to 225 (KGAAIGAGTAGVAGAAGAMGVS). Residues 205–225 (GAAIGAGTAGVAGAAGAMGVS) traverse the membrane as a helical segment. Residues 226–319 (KAKKHSNDAQ…KERKKGGMAK (94 aa)) are Cytoplasmic-facing. The span at 233-246 (DAQNKSNSGKVNNS) shows a compositional bias: polar residues. Residues 247–259 (TEDKASEDKSKEH) show a composition bias toward basic and acidic residues. The span at 278-297 (GAASNSASAASKPHASNNAS) shows a compositional bias: low complexity. Over residues 300 to 314 (NDEHDHHDRDKERKK) the composition is skewed to basic and acidic residues. Residues 320–340 (VLLPLIAAVLIIGALAIFGGM) traverse the membrane as a helical segment. Topologically, residues 341 to 486 (ALNNHNNGTK…IRNGQQIVIP (146 aa)) are extracellular. The tract at residues 351-440 (ENKIANTNKN…QRQGGGQRHT (90 aa)) is disordered. A compositionally biased stretch (basic and acidic residues) spans 361-398 (NADESKDKDTSKDASKDKSKSTDSDKSKDDQDKATKDE). The segment covering 403 to 431 (QNNANQANNQAQNNQNQQQANQNQQQQQQ) has biased composition (low complexity). The region spanning 437-485 (QRHTVNGQENLYRIAIQYYGSGSPENVEKIRRANGLSGNNIRNGQQIVI) is the LysM domain.

Its subcellular location is the cell membrane. In terms of biological role, promotes binding of soluble elastin peptides and tropoelastin to S.aureus cells although it is not able to promote bacterial adherence to immobilized elastin and, therefore, is not a microbial surface component recognizing adhesive matrix molecule (MSCRAMM). This Staphylococcus aureus (strain MRSA252) protein is Elastin-binding protein EbpS (ebpS).